Reading from the N-terminus, the 242-residue chain is Transcriptional activator protein BjaR1 (242 aa).

Residues 173 to 238 (TPYPSTRLTP…HAVALAIRHK (66 aa)) form the HTH luxR-type domain. The H-T-H motif DNA-binding region spans 197–216 (AWEIGEILHITQRTAEEHLA).

The protein belongs to the autoinducer-regulated transcriptional regulatory protein family.

In terms of biological role, transcriptional activator that functions in response to the quorum-sensing autoinducer IV-HSL (isovaleryl-homoserine lactone). Activates BjaI expression. Is sensitive to IV-HSL at concentrations as low as 10 pM. The protein is Transcriptional activator protein BjaR1 (bjaR1) of Bradyrhizobium diazoefficiens (strain JCM 10833 / BCRC 13528 / IAM 13628 / NBRC 14792 / USDA 110).